The chain runs to 104 residues: Flagellar hook-basal body complex protein FliE (104 aa).

Belongs to the FliE family.

It is found in the bacterial flagellum basal body. The polypeptide is Flagellar hook-basal body complex protein FliE (Pectobacterium carotovorum subsp. carotovorum (strain PC1)).